The sequence spans 410 residues: Chlorobenzene dioxygenase, ferredoxin reductase component (410 aa).

Residue H4–N35 coordinates FAD. R145–E173 is a binding site for NAD(+).

This sequence belongs to the bacterial ring-hydroxylating dioxygenase ferredoxin reductase family. This dioxygenase system consists of four proteins: the two subunits of the oxygenase component (TecA1 and TecA2), a ferredoxin (TecA3) and a ferredoxin reductase (TecA4). The cofactor is FAD.

It carries out the reaction 2 reduced [2Fe-2S]-[ferredoxin] + NAD(+) + H(+) = 2 oxidized [2Fe-2S]-[ferredoxin] + NADH. The protein operates within aromatic compound metabolism. Functionally, part of the chlorobenzene dioxygenase system that catalyzes the dihydroxylation of a range of aromatic compounds, including chlorinated benzenes and toluenes, and dinuclear aromatics such as biphenyl and dibenzo-p-dioxin. This chain is Chlorobenzene dioxygenase, ferredoxin reductase component, found in Cupriavidus sp. (strain PS12).